The primary structure comprises 32 residues: NGWNDNKNFVLFGAAAWIGLVLLVGTLYYFVV.

The helical transmembrane segment at 12–32 (FGAAAWIGLVLLVGTLYYFVV) threads the bilayer.

The protein belongs to the PsbZ family. As to quaternary structure, PSII is composed of 1 copy each of membrane proteins PsbA, PsbB, PsbC, PsbD, PsbE, PsbF, PsbH, PsbI, PsbJ, PsbK, PsbL, PsbM, PsbT, PsbY, PsbZ, Psb30/Ycf12, at least 3 peripheral proteins of the oxygen-evolving complex and a large number of cofactors. It forms dimeric complexes.

The protein localises to the plastid. The protein resides in the chloroplast thylakoid membrane. In terms of biological role, may control the interaction of photosystem II (PSII) cores with the light-harvesting antenna, regulates electron flow through the 2 photosystem reaction centers. PSII is a light-driven water plastoquinone oxidoreductase, using light energy to abstract electrons from H(2)O, generating a proton gradient subsequently used for ATP formation. This is Photosystem II reaction center protein Z from Euglena granulata.